Reading from the N-terminus, the 126-residue chain is Holo-[acyl-carrier-protein] synthase (126 aa).

Positions 9 and 58 each coordinate Mg(2+).

This sequence belongs to the P-Pant transferase superfamily. AcpS family. Requires Mg(2+) as cofactor.

The protein localises to the cytoplasm. It catalyses the reaction apo-[ACP] + CoA = holo-[ACP] + adenosine 3',5'-bisphosphate + H(+). Functionally, transfers the 4'-phosphopantetheine moiety from coenzyme A to a Ser of acyl-carrier-protein. This chain is Holo-[acyl-carrier-protein] synthase, found in Salmonella paratyphi B (strain ATCC BAA-1250 / SPB7).